A 147-amino-acid chain; its full sequence is Large ribosomal subunit protein uL13 (147 aa).

The protein belongs to the universal ribosomal protein uL13 family. Part of the 50S ribosomal subunit.

Its function is as follows. This protein is one of the early assembly proteins of the 50S ribosomal subunit, although it is not seen to bind rRNA by itself. It is important during the early stages of 50S assembly. This Rhodococcus opacus (strain B4) protein is Large ribosomal subunit protein uL13.